A 256-amino-acid chain; its full sequence is Proteasome subunit beta type-5 (256 aa).

Residues 1-55 (CNMALADIVRLPPASEAPFAPLGAPRDLSGPPSKLAVRPWGGADLPGPGLQLLHG) constitute a propeptide, removed in mature form. Threonine 56 acts as the Nucleophile in catalysis.

This sequence belongs to the peptidase T1B family. The 26S proteasome consists of a 20S proteasome core and two 19S regulatory subunits. The 20S proteasome core is a barrel-shaped complex made of 28 subunits that are arranged in four stacked rings. The two outer rings are each formed by seven alpha subunits, and the two inner rings are formed by seven beta subunits. The proteolytic activity is exerted by three beta-subunits PSMB5, PSMB6 and PSMB7. Directly interacts with POMP. Interacts with ABCB1 and TAP1.

It is found in the cytoplasm. The protein localises to the nucleus. The catalysed reaction is Cleavage of peptide bonds with very broad specificity.. Functionally, component of the 20S core proteasome complex involved in the proteolytic degradation of most intracellular proteins. This complex plays numerous essential roles within the cell by associating with different regulatory particles. Associated with two 19S regulatory particles, forms the 26S proteasome and thus participates in the ATP-dependent degradation of ubiquitinated proteins. The 26S proteasome plays a key role in the maintenance of protein homeostasis by removing misfolded or damaged proteins that could impair cellular functions, and by removing proteins whose functions are no longer required. Associated with the PA200 or PA28, the 20S proteasome mediates ubiquitin-independent protein degradation. This type of proteolysis is required in several pathways including spermatogenesis (20S-PA200 complex) or generation of a subset of MHC class I-presented antigenic peptides (20S-PA28 complex). Within the 20S core complex, PSMB5 displays a chymotrypsin-like activity. The protein is Proteasome subunit beta type-5 (PSMB5) of Gallus gallus (Chicken).